The primary structure comprises 160 residues: Cytochrome b6-f complex subunit 4 (160 aa).

3 helical membrane passes run 36 to 56 (LLYI…GLAV), 95 to 115 (LLGV…PFLE), and 131 to 151 (TVFL…AMPI).

It belongs to the cytochrome b family. PetD subfamily. The 4 large subunits of the cytochrome b6-f complex are cytochrome b6, subunit IV (17 kDa polypeptide, petD), cytochrome f and the Rieske protein, while the 4 small subunits are petG, petL, petM and petN. The complex functions as a dimer.

The protein resides in the plastid. It is found in the chloroplast thylakoid membrane. Functionally, component of the cytochrome b6-f complex, which mediates electron transfer between photosystem II (PSII) and photosystem I (PSI), cyclic electron flow around PSI, and state transitions. The sequence is that of Cytochrome b6-f complex subunit 4 from Zygnema circumcarinatum (Green alga).